Consider the following 154-residue polypeptide: Lipoprotein signal peptidase (154 aa).

The next 3 helical transmembrane spans lie at 4–24 (IIIP…KLWI), 62–82 (LFTL…MKHI), and 84–104 (GSYW…GNFI). Residues D114 and D130 contribute to the active site. Residues 125-145 (IFNVADSYLTIGIICLMIALW) traverse the membrane as a helical segment.

This sequence belongs to the peptidase A8 family.

The protein localises to the cell membrane. The catalysed reaction is Release of signal peptides from bacterial membrane prolipoproteins. Hydrolyzes -Xaa-Yaa-Zaa-|-(S,diacylglyceryl)Cys-, in which Xaa is hydrophobic (preferably Leu), and Yaa (Ala or Ser) and Zaa (Gly or Ala) have small, neutral side chains.. It functions in the pathway protein modification; lipoprotein biosynthesis (signal peptide cleavage). In terms of biological role, this protein specifically catalyzes the removal of signal peptides from prolipoproteins. This is Lipoprotein signal peptidase from Streptococcus agalactiae serotype V (strain ATCC BAA-611 / 2603 V/R).